A 425-amino-acid chain; its full sequence is Riboflavin biosynthesis protein RibBA (425 aa).

Residues 1-204 (MTRLDSVERA…IADLIEWRRK (204 aa)) form a DHBP synthase region. D-ribulose 5-phosphate is bound by residues 28–29 (RE), aspartate 33, 141–145 (RPGHT), and glutamate 165. Glutamate 29 contacts Mg(2+). Histidine 144 contributes to the Mg(2+) binding site. The tract at residues 205–425 (HEKHIERIAE…HLPGEFGGAL (221 aa)) is GTP cyclohydrolase II. Residue 259 to 263 (RVHSE) coordinates GTP. Zn(2+)-binding residues include cysteine 264, cysteine 275, and cysteine 277. GTP contacts are provided by residues glutamine 280, 303–305 (EGR), and threonine 325. Catalysis depends on aspartate 337, which acts as the Proton acceptor; for GTP cyclohydrolase activity. Arginine 339 (nucleophile; for GTP cyclohydrolase activity) is an active-site residue. GTP-binding residues include threonine 360 and lysine 365.

This sequence in the N-terminal section; belongs to the DHBP synthase family. In the C-terminal section; belongs to the GTP cyclohydrolase II family. Mg(2+) is required as a cofactor. It depends on Mn(2+) as a cofactor. Zn(2+) serves as cofactor.

It catalyses the reaction D-ribulose 5-phosphate = (2S)-2-hydroxy-3-oxobutyl phosphate + formate + H(+). The catalysed reaction is GTP + 4 H2O = 2,5-diamino-6-hydroxy-4-(5-phosphoribosylamino)-pyrimidine + formate + 2 phosphate + 3 H(+). The protein operates within cofactor biosynthesis; riboflavin biosynthesis; 2-hydroxy-3-oxobutyl phosphate from D-ribulose 5-phosphate: step 1/1. It participates in cofactor biosynthesis; riboflavin biosynthesis; 5-amino-6-(D-ribitylamino)uracil from GTP: step 1/4. In terms of biological role, catalyzes the conversion of D-ribulose 5-phosphate to formate and 3,4-dihydroxy-2-butanone 4-phosphate. Functionally, catalyzes the conversion of GTP to 2,5-diamino-6-ribosylamino-4(3H)-pyrimidinone 5'-phosphate (DARP), formate and pyrophosphate. The polypeptide is Riboflavin biosynthesis protein RibBA (Mycolicibacterium paratuberculosis (strain ATCC BAA-968 / K-10) (Mycobacterium paratuberculosis)).